The primary structure comprises 575 residues: RecBCD enzyme subunit RecD (575 aa).

An ATP-binding site is contributed by 170 to 177 (GGPGTGKT).

Belongs to the RecD family. As to quaternary structure, heterotrimer of RecB, RecC and RecD. All subunits contribute to DNA-binding.

It carries out the reaction Couples ATP hydrolysis with the unwinding of duplex DNA at the replication fork by translocating in the 5'-3' direction. This creates two antiparallel DNA single strands (ssDNA). The leading ssDNA polymer is the template for DNA polymerase III holoenzyme which synthesizes a continuous strand.. It catalyses the reaction ATP + H2O = ADP + phosphate + H(+). Functionally, a helicase/nuclease that prepares dsDNA breaks (DSB) for recombinational DNA repair. Binds to DSBs and unwinds DNA via a highly rapid and processive ATP-dependent bidirectional helicase activity. Holoenzyme degrades any linearized DNA that is unable to undergo homologous recombination. In the holoenzyme this subunit has ssDNA-dependent ATPase and 5'-3' helicase activity. When added to pre-assembled RecBC greatly stimulates nuclease activity and augments holoenzyme processivity. Unlike the case in E.coli, suppresses RecA-dependent homologous recombination, is instead required for single-strand annealing pathway repair of DSB. In terms of biological role, a helicase/nuclease that prepares dsDNA breaks (DSB) for recombinational DNA repair. Binds to DSBs and unwinds DNA via a highly rapid and processive ATP-dependent bidirectional helicase activity. Unwinds dsDNA until it encounters a Chi (crossover hotspot instigator) sequence from the 3' direction. Cuts ssDNA a few nucleotides 3' to the Chi site. The properties and activities of the enzyme are changed at Chi. The Chi-altered holoenzyme produces a long 3'-ssDNA overhang and facilitates RecA-binding to the ssDNA for homologous DNA recombination and repair. Holoenzyme degrades any linearized DNA that is unable to undergo homologous recombination. In the holoenzyme this subunit has ssDNA-dependent ATPase and 5'-3' helicase activity. When added to pre-assembled RecBC greatly stimulates nuclease activity and augments holoenzyme processivity. Negatively regulates the RecA-loading ability of RecBCD. The protein is RecBCD enzyme subunit RecD of Mycobacterium tuberculosis (strain CDC 1551 / Oshkosh).